We begin with the raw amino-acid sequence, 2845 residues long: Multiple epidermal growth factor-like domains protein 8 (2845 aa).

A signal peptide spans 1–27; the sequence is MALGKVLAMALVLALAVLGSLSPGARA. At 28-2647 the chain is on the extracellular side; sequence GDCKGQRQVL…FFRQDQAHID (2620 aa). 6 cysteine pairs are disulfide-bonded: cysteine 30–cysteine 57, cysteine 142–cysteine 152, cysteine 146–cysteine 158, cysteine 174–cysteine 184, cysteine 178–cysteine 191, and cysteine 193–cysteine 202. The 111-residue stretch at 30 to 140 folds into the CUB 1 domain; that stretch reads CKGQRQVLRE…LGFNASFRFS (111 aa). N-linked (GlcNAc...) asparagine glycosylation occurs at asparagine 50. 2 EGF-like domains span residues 138 to 168 and 170 to 203; these read RFSLCPGGCQSHGQCQPPGVCACEPGWGGPD and GLQECSAYCGSHGTCASPLGPCRCEPGFLGRACD. N-linked (GlcNAc...) asparagine glycosylation is present at asparagine 217. Kelch repeat units lie at residues 241–287, 290–338, 346–399, 402–453, 459–511, and 525–575; these read LLAV…AVAW, SLVL…AGHA, WLYV…FHAP, ALLV…FHTA, YMVV…APPS, and VLLV…SRDP. PSI domains follow at residues 561 to 613, 847 to 899, and 900 to 947; these read YCSM…GDCQ, SCTS…TLCP, and LCEE…EECP. The N-linked (GlcNAc...) asparagine glycan is linked to asparagine 1048. Positions 1074–1115 constitute an EGF-like 3; calcium-binding domain; sequence DVDECRLGLARCHPRATCLNTPLSYECHCQRGYQGDGISHCN. Intrachain disulfides connect cysteine 1078/cysteine 1091, cysteine 1085/cysteine 1100, cysteine 1102/cysteine 1114, cysteine 1163/cysteine 1171, cysteine 1165/cysteine 1179, cysteine 1182/cysteine 1191, cysteine 1194/cysteine 1208, cysteine 1211/cysteine 1224, cysteine 1213/cysteine 1231, cysteine 1233/cysteine 1242, cysteine 1245/cysteine 1259, cysteine 1263/cysteine 1302, cysteine 1336/cysteine 1367, cysteine 1407/cysteine 1421, cysteine 1415/cysteine 1433, and cysteine 1435/cysteine 1444. Laminin EGF-like domains lie at 1163-1210 and 1211-1261; these read CGCS…GCRP and CQCN…SCFR. Residues 1263-1405 form the CUB 2 domain; sequence CGGRALLTNV…WGFNASVGSA (143 aa). Residue asparagine 1271 is glycosylated (N-linked (GlcNAc...) asparagine). Phosphothreonine is present on threonine 1353. In terms of domain architecture, EGF-like 4 spans 1403 to 1445; it reads GSARCGSGGPGSCPVPQECVPQDGAAGAGLCRCPQGWAGPHCR. 6 Kelch repeats span residues 1522-1570, 1580-1626, 1632-1679, 1685-1735, 1796-1843, and 1852-1898; these read TLWM…SFHA, AMYL…HTLT, SLLL…SAVY, SLYV…VRGS, TMVV…ESVA, and RLYI…CHGA. Residues 1726–1745 are disordered; that stretch reads RDRMRNVRGSSRGLGQVPGE. 4 PSI domains span residues 1876 to 1916, 1924 to 1979, 2060 to 2118, and 2120 to 2177; these read PCRL…SPCS, ECRR…NDCR, PCHL…ESCS, and GCAQ…LSCP. Asparagine 2066 carries N-linked (GlcNAc...) asparagine glycosylation. Residues 2178-2216 form the EGF-like 5 domain; that stretch reads PEDECANGHHDCNETQNCHDQPHGYECSCKTGYTMDNMT. 2 disulfide bridges follow: cysteine 2182–cysteine 2195 and cysteine 2189–cysteine 2204. Asparagine 2229 is a glycosylation site (N-linked (GlcNAc...) asparagine). 8 cysteine pairs are disulfide-bonded: cysteine 2253-cysteine 2261, cysteine 2255-cysteine 2270, cysteine 2273-cysteine 2282, cysteine 2285-cysteine 2299, cysteine 2380-cysteine 2389, cysteine 2382-cysteine 2397, cysteine 2399-cysteine 2424, and cysteine 2427-cysteine 2441. 2 Laminin EGF-like domains span residues 2253–2301 and 2380–2443; these read CRCN…TCRP and CQCN…QCYR. Residues 2523–2564 form a disordered region; the sequence is TVHIQPPPAPPPPPPPADGGPRGAGDPGGAGASSGPGAPAEP. Pro residues predominate over residues 2527-2540; sequence QPPPAPPPPPPPAD. Residues 2542-2556 are compositionally biased toward gly residues; sequence GPRGAGDPGGAGASS. A helical membrane pass occupies residues 2648–2668; that stretch reads LFVFFSVFFSCFFLFLSLCVL. The Cytoplasmic portion of the chain corresponds to 2669–2845; that stretch reads LWKAKQALDQ…SQDNLTSMSL (177 aa). The span at 2817-2831 shows a compositional bias: gly residues; it reads GGGAGGSGHGTGAGR. Residues 2817 to 2845 form a disordered region; it reads GGGAGGSGHGTGAGRKGLLSQDNLTSMSL. Polar residues predominate over residues 2836–2845; sequence SQDNLTSMSL.

The protein resides in the membrane. Acts as a negative regulator of hedgehog signaling. The chain is Multiple epidermal growth factor-like domains protein 8 (MEGF8) from Homo sapiens (Human).